Reading from the N-terminus, the 139-residue chain is Inactive palmitoleoyl-protein carboxylesterase notum1b (139 aa).

This sequence belongs to the pectinacetylesterase family. Notum subfamily.

Probable inactive palmitoleoyl-protein carboxylesterase. The polypeptide is Inactive palmitoleoyl-protein carboxylesterase notum1b (Danio rerio (Zebrafish)).